A 276-amino-acid chain; its full sequence is N-acyl homoserine lactonase AiiB (276 aa).

Positions 111, 113, 116, 191, 213, and 259 each coordinate Zn(2+).

Belongs to the metallo-beta-lactamase superfamily. Requires Zn(2+) as cofactor.

It carries out the reaction an N-acyl-L-homoserine lactone + H2O = an N-acyl-L-homoserine + H(+). The polypeptide is N-acyl homoserine lactonase AiiB (Agrobacterium fabrum (strain C58 / ATCC 33970) (Agrobacterium tumefaciens (strain C58))).